We begin with the raw amino-acid sequence, 46 residues long: Large ribosomal subunit protein bL34c (46 aa).

Belongs to the bacterial ribosomal protein bL34 family.

The protein localises to the plastid. It localises to the chloroplast. This is Large ribosomal subunit protein bL34c from Pyropia yezoensis (Susabi-nori).